Consider the following 314-residue polypeptide: Lipid A biosynthesis acyltransferase 2 (314 aa).

The helical transmembrane segment at 17–37 threads the bilayer; sequence LSPVYWFTWFVLGMIAGISMF. Positions 137–142 match the HXXXXD motif motif; the sequence is HGWSVD.

The protein belongs to the LpxL/LpxM/LpxP family. LpxM subfamily.

It localises to the cell inner membrane. The enzyme catalyses an alpha-Kdo-(2-&gt;4)-alpha-Kdo-(2-&gt;6)-(acyl)-lipid IVA + a fatty acyl-[ACP] = an alpha-Kdo-(2-&gt;4)-alpha-Kdo-(2-&gt;6)-lipid A + holo-[ACP]. The protein operates within glycolipid biosynthesis; KDO(2)-lipid A biosynthesis; KDO(2)-lipid A from CMP-3-deoxy-D-manno-octulosonate and lipid IV(A): step 4/4. It participates in bacterial outer membrane biogenesis; lipopolysaccharide biosynthesis. In terms of biological role, catalyzes the transfer of an acyl chain from an acyl-[acyl-carrier-protein] (ACP) to a Kdo(2)-(acyl)-lipid IV(A) to form a Kdo(2)-lipid A. The sequence is that of Lipid A biosynthesis acyltransferase 2 from Shigella flexneri.